The following is a 175-amino-acid chain: Coagulogen (175 aa).

Disulfide bonds link Cys8-Cys167, Cys10-Cys95, Cys60-Cys161, Cys65-Cys121, Cys75-Cys168, Cys88-Cys140, Cys127-Cys170, and Cys134-Cys172.

It belongs to the coagulin family. In terms of assembly, coagulogen is cleaved after Arg-18 and Arg-46 by a clotting enzyme contained in the hemocyte and activated by a bacterial endotoxin (lipopolysaccharide). This cleavage releases the peptide C and leaves 2 chains of coagulin, A and B, linked by two disulfide bonds. Coagulin molecules interlink to form a gel. As to expression, hemolymph.

The protein localises to the secreted. In terms of biological role, coagulogen is a gel-forming protein of hemolymph; it hinders the spread of invaders by immobilizing them. The chain is Coagulogen from Carcinoscorpius rotundicauda (Mangrove horseshoe crab).